We begin with the raw amino-acid sequence, 127 residues long: Aspartate 1-decarboxylase (127 aa).

The active-site Schiff-base intermediate with substrate; via pyruvic acid is Ser25. At Ser25 the chain carries Pyruvic acid (Ser). Thr57 provides a ligand contact to substrate. The Proton donor role is filled by Tyr58. Residue 73 to 75 participates in substrate binding; the sequence is GAA.

Belongs to the PanD family. In terms of assembly, heterooctamer of four alpha and four beta subunits. It depends on pyruvate as a cofactor. Is synthesized initially as an inactive proenzyme, which is activated by self-cleavage at a specific serine bond to produce a beta-subunit with a hydroxyl group at its C-terminus and an alpha-subunit with a pyruvoyl group at its N-terminus.

It localises to the cytoplasm. The catalysed reaction is L-aspartate + H(+) = beta-alanine + CO2. It functions in the pathway cofactor biosynthesis; (R)-pantothenate biosynthesis; beta-alanine from L-aspartate: step 1/1. In terms of biological role, catalyzes the pyruvoyl-dependent decarboxylation of aspartate to produce beta-alanine. The protein is Aspartate 1-decarboxylase of Aliarcobacter butzleri (strain RM4018) (Arcobacter butzleri).